The sequence spans 1238 residues: DNA-directed RNA polymerase subunit beta (1238 aa).

The disordered stretch occupies residues 1186 to 1238 (IEGREDTPPEEVYEEGYEEGFEEESEELPEDIDFEPDSFDIENDDLDLEDFDI). The span at 1193–1238 (PPEEVYEEGYEEGFEEESEELPEDIDFEPDSFDIENDDLDLEDFDI) shows a compositional bias: acidic residues.

It belongs to the RNA polymerase beta chain family. The RNAP catalytic core consists of 2 alpha, 1 beta, 1 beta' and 1 omega subunit. When a sigma factor is associated with the core the holoenzyme is formed, which can initiate transcription.

The enzyme catalyses RNA(n) + a ribonucleoside 5'-triphosphate = RNA(n+1) + diphosphate. Functionally, DNA-dependent RNA polymerase catalyzes the transcription of DNA into RNA using the four ribonucleoside triphosphates as substrates. This is DNA-directed RNA polymerase subunit beta from Thermoanaerobacter sp. (strain X514).